The following is a 117-amino-acid chain: Large ribosomal subunit protein uL18 (117 aa).

The protein belongs to the universal ribosomal protein uL18 family. In terms of assembly, part of the 50S ribosomal subunit; part of the 5S rRNA/L5/L18/L25 subcomplex. Contacts the 5S and 23S rRNAs.

Its function is as follows. This is one of the proteins that bind and probably mediate the attachment of the 5S RNA into the large ribosomal subunit, where it forms part of the central protuberance. In Yersinia pseudotuberculosis serotype O:1b (strain IP 31758), this protein is Large ribosomal subunit protein uL18.